A 374-amino-acid chain; its full sequence is Chaperone protein DnaJ (374 aa).

The 65-residue stretch at 6–70 (DYYDILGVSK…QKRAQYDQFG (65 aa)) folds into the J domain. The CR-type zinc finger occupies 135 to 217 (GKKTTIKYSR…CGGTGHTSQQ (83 aa)). Zn(2+)-binding residues include C148, C151, C165, C168, C191, C194, C205, and C208. CXXCXGXG motif repeat units follow at residues 148 to 155 (CKTCGGSG), 165 to 172 (CHKCNGTG), 191 to 198 (CDVCNGTG), and 205 to 212 (CPTCGGTG). Disordered stretches follow at residues 308–328 (GTNF…GTGD) and 347–374 (EALK…KFMN).

Belongs to the DnaJ family. In terms of assembly, homodimer. The cofactor is Zn(2+).

Its subcellular location is the cytoplasm. Functionally, participates actively in the response to hyperosmotic and heat shock by preventing the aggregation of stress-denatured proteins and by disaggregating proteins, also in an autonomous, DnaK-independent fashion. Unfolded proteins bind initially to DnaJ; upon interaction with the DnaJ-bound protein, DnaK hydrolyzes its bound ATP, resulting in the formation of a stable complex. GrpE releases ADP from DnaK; ATP binding to DnaK triggers the release of the substrate protein, thus completing the reaction cycle. Several rounds of ATP-dependent interactions between DnaJ, DnaK and GrpE are required for fully efficient folding. Also involved, together with DnaK and GrpE, in the DNA replication of plasmids through activation of initiation proteins. In Pediococcus pentosaceus (strain ATCC 25745 / CCUG 21536 / LMG 10740 / 183-1w), this protein is Chaperone protein DnaJ.